The chain runs to 434 residues: Adenylosuccinate synthetase (434 aa).

Residues 15–21 (GDEGKGK) and 43–45 (GHT) each bind GTP. D16 acts as the Proton acceptor in catalysis. D16 and G43 together coordinate Mg(2+). IMP is bound by residues 16-19 (DEGK), 41-44 (NAGH), T133, R147, Q228, T243, and R307. Residue H44 is the Proton donor of the active site. 303–309 (SVTGRAR) contacts substrate. GTP-binding positions include R309, 335 to 337 (KLD), and 418 to 420 (STG).

Belongs to the adenylosuccinate synthetase family. In terms of assembly, homodimer. Requires Mg(2+) as cofactor.

The protein resides in the cytoplasm. It carries out the reaction IMP + L-aspartate + GTP = N(6)-(1,2-dicarboxyethyl)-AMP + GDP + phosphate + 2 H(+). It participates in purine metabolism; AMP biosynthesis via de novo pathway; AMP from IMP: step 1/2. Plays an important role in the de novo pathway of purine nucleotide biosynthesis. Catalyzes the first committed step in the biosynthesis of AMP from IMP. The chain is Adenylosuccinate synthetase from Neisseria gonorrhoeae (strain NCCP11945).